We begin with the raw amino-acid sequence, 207 residues long: MKSYTALLAVAILCLFAAVGVSGKCTKNALAQTGFNKDKYFNGDVWYVTDYLDLEPDDVPKRYCAALAAGTASGKLKEALYHYDPKTQDTFYDVSELQEESPGKYTANFKKVEKNGNVKVDVTSGNYYTFTVMYADDSSALIHTCLHKGNKDLGDLYAVLNRNKDTNAGDKVKGAVTAASLKFSDFISTKDNKCEYDNVSLKSLLTK.

The signal sequence occupies residues M1 to G23. 2 disulfides stabilise this stretch: C25/C145 and C64/C194. H82 provides a ligand contact to heme.

It belongs to the calycin superfamily. Nitrophorin family. As to expression, salivary gland (at protein level).

It is found in the secreted. Heme-based protein that deliver nitric oxide gas (NO) to the victim while feeding, resulting in vasodilation and inhibition of platelet aggregation. Reversibly binds nitric oxide (NO). Also binds tightly to histamine, which is released by the host to induce wound healing. In Rhodnius prolixus (Triatomid bug), this protein is Nitrophorin-1.